Consider the following 185-residue polypeptide: Ribosome-recycling factor (185 aa).

It belongs to the RRF family.

It localises to the cytoplasm. Functionally, responsible for the release of ribosomes from messenger RNA at the termination of protein biosynthesis. May increase the efficiency of translation by recycling ribosomes from one round of translation to another. The chain is Ribosome-recycling factor from Listeria welshimeri serovar 6b (strain ATCC 35897 / DSM 20650 / CCUG 15529 / CIP 8149 / NCTC 11857 / SLCC 5334 / V8).